Reading from the N-terminus, the 652-residue chain is Serine/threonine-protein kinase ssp1 (652 aa).

Y58 carries the phosphotyrosine modification. Residue S59 is modified to Phosphoserine. At Y63 the chain carries Phosphotyrosine. The 275-residue stretch at 135–409 folds into the Protein kinase domain; sequence YEIIKELGRG…LVEVKLHPWT (275 aa). ATP is bound by residues 141 to 149 and K164; that span reads LGRGMHGKV. D267 (proton acceptor) is an active-site residue. Disordered stretches follow at residues 467 to 491 and 506 to 529; these read DSSS…SIGL and NESQ…SSEK. Residues 508-518 are compositionally biased toward basic and acidic residues; the sequence is SQKDRERKQVH.

It belongs to the protein kinase superfamily. Ser/Thr protein kinase family.

Its subcellular location is the cytoplasm. It carries out the reaction L-seryl-[protein] + ATP = O-phospho-L-seryl-[protein] + ADP + H(+). The enzyme catalyses L-threonyl-[protein] + ATP = O-phospho-L-threonyl-[protein] + ADP + H(+). In terms of biological role, involved in actin localization and thus in polarized cell growth. In Schizosaccharomyces pombe (strain 972 / ATCC 24843) (Fission yeast), this protein is Serine/threonine-protein kinase ssp1 (ssp1).